A 141-amino-acid chain; its full sequence is Putative antiporter subunit mnhB2 (141 aa).

The next 4 helical transmembrane spans lie at 10 to 30, 35 to 55, 70 to 90, and 114 to 134; these read TVTKLVVFILLTFGFYVFFAG, GGGFIGGLIFSSAFILMFLAF, ILMIIGALVSSITAIIPMFFG, and ITLFELGILFSVVGVIVTVML.

It belongs to the CPA3 antiporters (TC 2.A.63) subunit B family. May form a heterooligomeric complex that consists of seven subunits: mnhA2, mnhB2, mnhC2, mnhD2, mnhE2, mnhF2 and mnhG2.

It is found in the cell membrane. The polypeptide is Putative antiporter subunit mnhB2 (mnhB2) (Staphylococcus aureus (strain Mu3 / ATCC 700698)).